Reading from the N-terminus, the 1105-residue chain is MAAAGSAGLPATVSEKQEFYQLLKNLINPSCMVRRQAEEVYENIPGLCKTTFLLDAVRNRRAGYEVRQMAAALLRRLLSSGFEEVYPNLPPEVQRDVKIELILAVKLETHASMRKKLCDIFAVLARNLIDESGTNHWPEGLKFLIDSIHSKNVVLWEVALHVFWHFPGIFGNQDRHDLDIIKRLLDQCIQDQEHPAIRTLSARAAATFVLANENNIALFKDFADLLPGILQAVNDSCYQDDDSVLESLVEIADTVPKYLGPYLEDTLQLSLKLCGDSRLSNLQRQLALEVIVTLSETATPMLKKHTNIIAQAVPHILAMMVDLQDDDDWVNADEMEEDDFDSNAVAAESALDRLACGLGGKVVLPMTKEHIMQMLQSPDWKCRHAGLMALSAIGEGCHQQMEPILDETVNSVLLFLQDPHPRVRAAACTTLGQMATDFAPSFQKKFHEIVITALLRTMENQGNQRVQSHAASALVIFIEDCPKSLLILYLENMVKSLHSILVIKLQELIRNGTKLALEQLVTTIASVADAIEESFIPYYDIFMPSLKHVVELAVQKELKLLRGKTIECISHVGLAVGKEKFMQDASNVMQLLLKTQSDLNNMEDDDPQTSYMVSAWARMCKILGKDFEQYLPLVIEPLIKTASAKPDVALLDTQDVENMSDDDGWQFVNLGDQQSFGIKTSGLEAKATACQMLVYYAKELREGFVEYTEQVVKMMVPLLKFYFHDNVRVAAAEAMPFLLECARIRGSEYLSQMWQFICDPLIKAIGTEPDTDVLSEIMNSFAKSIEVMGDGCLNDEHLEELGGILKAKLEGHFKNQELRQVKRQEENYDQQVEMSLQDEDECDVYILTKVSDILHSLFSTYKEKILPWFEQLLPLIVNLICSSRPWPDRQWGLCIFDDIIEHCSPTSFKYVEYFRWPMLLNMRDNNPEVRQAAAYGLGVMAQFGGDDYRSLCSEAVPLLVKVIKCANSKTKKNVIATENCISAIGKILKFKPNCVNVDEVLPHWLSWLPLHEDKEEAIQTLNFLCDLIESNHPVVIGPNNSNLPKIISIIAEGKINETISHEDPCAKRLANVVRQIQTSEELWLECTSQLDDEQQEALHELLSFA.

A2 bears the N-acetylalanine mark. HEAT repeat units follow at residues 219–257 (FKDFADLLPGILQAVNDSCYQDDDSVLESLVEIADTVPK), 361–399 (KVVLPMTKEHIMQMLQSPDWKCRHAGLMALSAIGEGCHQ), 402–440 (EPILDETVNSVLLFLQDPHPRVRAAACTTLGQMATDFAP), 444–483 (KKFHEIVITALLRTMENQGNQRVQSHAASALVIFIEDCPK), 866–905 (LPWFEQLLPLIVNLICSSRPWPDRQWGLCIFDDIIEHCSP), 908–946 (FKYVEYFRWPMLLNMRDNNPEVRQAAAYGLGVMAQFGGD), and 949–987 (RSLCSEAVPLLVKVIKCANSKTKKNVIATENCISAIGKI).

It belongs to the importin beta family.

It localises to the cytoplasm. Its subcellular location is the nucleus. In terms of biological role, may function in nuclear protein import as nuclear transport receptor. The chain is Ran-binding protein 6 (Ranbp6) from Mus musculus (Mouse).